The chain runs to 196 residues: Recombination protein RecR (196 aa).

The C4-type zinc-finger motif lies at 55-70 (CELCGNLESESPCSIC). The Toprim domain occupies 78–173 (DIVCVVEEIT…KLSFLAHGIP (96 aa)).

It belongs to the RecR family.

Its function is as follows. May play a role in DNA repair. It seems to be involved in an RecBC-independent recombinational process of DNA repair. It may act with RecF and RecO. The chain is Recombination protein RecR from Neorickettsia sennetsu (strain ATCC VR-367 / Miyayama) (Ehrlichia sennetsu).